A 318-amino-acid polypeptide reads, in one-letter code: Ubiquinone biosynthesis protein COQ9, mitochondrial (318 aa).

The transit peptide at 1–44 (MAAAAVSGALGRAGWRLLQLRCLPVARCRQALVPRAFHASAVGL) directs the protein to the mitochondrion. Positions 16–31 (RLLQLRCLPVARCRQA) match the SIFI-degron motif. Residues 44-98 (LRSSDEQKQQPPNSFSQQHSETQGAEKPDPESSHSPPRYTDQGGEEEEDYESEEQ) form a disordered region. Residues 52–66 (QQPPNSFSQQHSETQ) are compositionally biased toward polar residues. Over residues 86–97 (GGEEEEDYESEE) the composition is skewed to acidic residues. Lysine 175 is subject to N6-acetyllysine. Arginine 244 is an a 1,2-diacylglycero-3-phosphoethanolamine binding site.

This sequence belongs to the COQ9 family. In terms of assembly, homodimer. Heterodimer; two heterodimers of COQ7:COQ9 come together on the same side of the lipid pseudo-bilayer and form a curved tetramer with a hydrophobic surface suitable for membrane interaction. These two tetramers assemble into a soluble octamer with a pseudo-bilayer of lipids captured within. Interacts with COQ7; this interaction allows ubiquinone (CoQ) isoprene intermediates presentation to COQ7 and facilitates the COQ7-mediated hydroxylase step. Post-translationally, in response to mitochondrial stress, the precursor protein is ubiquitinated by the SIFI complex in the cytoplasm before mitochondrial import, leading to its degradation. Within the SIFI complex, UBR4 initiates ubiquitin chain that are further elongated or branched by KCMF1.

The protein localises to the mitochondrion. The protein operates within cofactor biosynthesis; ubiquinone biosynthesis. Its function is as follows. Membrane-associated protein that warps the membrane surface to access and bind aromatic isoprenes with high specificity, including ubiquinone (CoQ) isoprene intermediates and presents them directly to COQ7, therefore facilitating the COQ7-mediated hydroxylase step. Participates in the biosynthesis of coenzyme Q, also named ubiquinone, an essential lipid-soluble electron transporter for aerobic cellular respiration. This chain is Ubiquinone biosynthesis protein COQ9, mitochondrial, found in Homo sapiens (Human).